A 422-amino-acid chain; its full sequence is Keratin, type I cytoskeletal 23 (422 aa).

The segment covering 1–13 (MNSGHSFSQTPSA) has biased composition (polar residues). The segment at 1–71 (MNSGHSFSQT…GRSSPLLGGN (71 aa)) is head. The interval 1–73 (MNSGHSFSQT…SSPLLGGNGK (73 aa)) is disordered. Residues 72-107 (GKATMQNLNDRLASYLEKVRALEEANMKLESRILKW) are coil 1A. Residues 72 to 382 (GKATMQNLND…RLLEGESEGT (311 aa)) enclose the IF rod domain. The linker 1 stretch occupies residues 108–125 (HQQRDPGSKKDYSQYEEN). The tract at residues 126 to 217 (ITHLQEQIVD…KHHEQEMEKH (92 aa)) is coil 1B. The interval 218–240 (HVPSDFNVNVKVDTGPREDLIKV) is linker 12. A coil 2 region spans residues 241 to 378 (LEDMRQEYEL…TTYRRLLEGE (138 aa)). The segment at 379–422 (SEGTREESKSSMKVSATPKIKAITQETINGRLVLCQVNEIQKHA) is rod-like helical tail.

It belongs to the intermediate filament family. Heterotetramer of two type I and two type II keratins.

The sequence is that of Keratin, type I cytoskeletal 23 (KRT23) from Homo sapiens (Human).